The sequence spans 287 residues: MAIAFQDVNTTSLGAITSDLNKAARPTVLVFDSGVGGLSIYQEIRQLLPDLHYIYVFDNEAFPYGEKSEEFIVERVVQIVGAIQQKHPLTIVVIACNTASTVSLPALRERFSFPVVGVVPAIKPAAKLTRNGVVGLLATRATVNRSYTKELIEKFATGCRIESIGSAELVELAEIKLHGGKVSPDILKKILKPWLGMKKPPDTVVLGCTHFPLLAEELVQILPDGTRLIDSGVAIARRTAWLVKHQNNLVCTSADSLAYCMKVNTDTDALIPVLQEYGFSKLEKLIT.

Substrate contacts are provided by residues 32–33 and 64–65; these read DS and YG. Residue Cys-96 is the Proton donor/acceptor of the active site. 97–98 is a substrate binding site; the sequence is NT. Catalysis depends on Cys-208, which acts as the Proton donor/acceptor. Substrate is bound at residue 209 to 210; sequence TH.

This sequence belongs to the aspartate/glutamate racemases family.

It catalyses the reaction L-glutamate = D-glutamate. Its pathway is cell wall biogenesis; peptidoglycan biosynthesis. Provides the (R)-glutamate required for cell wall biosynthesis. The polypeptide is Glutamate racemase (Photorhabdus laumondii subsp. laumondii (strain DSM 15139 / CIP 105565 / TT01) (Photorhabdus luminescens subsp. laumondii)).